The sequence spans 309 residues: HPr kinase/phosphorylase (309 aa).

Residues H138 and K159 contribute to the active site. 153-160 (GASGIGKS) provides a ligand contact to ATP. S160 provides a ligand contact to Mg(2+). Catalysis depends on D177, which acts as the Proton acceptor; for phosphorylation activity. Proton donor; for dephosphorylation activity. Residues 201 to 210 (IEIRGVGIID) are important for the catalytic mechanism of both phosphorylation and dephosphorylation. E202 is a Mg(2+) binding site. R243 is an active-site residue. Residues 264 to 269 (PVKTGR) form an important for the catalytic mechanism of dephosphorylation region.

The protein belongs to the HPrK/P family. As to quaternary structure, homohexamer. Mg(2+) serves as cofactor.

It catalyses the reaction [HPr protein]-L-serine + ATP = [HPr protein]-O-phospho-L-serine + ADP + H(+). The catalysed reaction is [HPr protein]-O-phospho-L-serine + phosphate + H(+) = [HPr protein]-L-serine + diphosphate. Functionally, catalyzes the ATP- as well as the pyrophosphate-dependent phosphorylation of a specific serine residue in HPr, a phosphocarrier protein of the phosphoenolpyruvate-dependent sugar phosphotransferase system (PTS). HprK/P also catalyzes the pyrophosphate-producing, inorganic phosphate-dependent dephosphorylation (phosphorolysis) of seryl-phosphorylated HPr (P-Ser-HPr). The two antagonistic activities of HprK/P are regulated by several intracellular metabolites, which change their concentration in response to the absence or presence of rapidly metabolisable carbon sources (glucose, fructose, etc.) in the growth medium. Therefore, by controlling the phosphorylation state of HPr, HPrK/P is a sensor enzyme that plays a major role in the regulation of carbon metabolism and sugar transport: it mediates carbon catabolite repression (CCR), and regulates PTS-catalyzed carbohydrate uptake and inducer exclusion. This chain is HPr kinase/phosphorylase, found in Lactococcus lactis subsp. lactis (strain IL1403) (Streptococcus lactis).